The primary structure comprises 338 residues: RNA 3'-terminal phosphate cyclase (338 aa).

ATP contacts are provided by residues glutamine 103 and 283–287 (YLADQ). Histidine 308 functions as the Tele-AMP-histidine intermediate in the catalytic mechanism.

It belongs to the RNA 3'-terminal cyclase family. Type 1 subfamily.

The protein localises to the cytoplasm. It carries out the reaction a 3'-end 3'-phospho-ribonucleotide-RNA + ATP = a 3'-end 2',3'-cyclophospho-ribonucleotide-RNA + AMP + diphosphate. Functionally, catalyzes the conversion of 3'-phosphate to a 2',3'-cyclic phosphodiester at the end of RNA. The mechanism of action of the enzyme occurs in 3 steps: (A) adenylation of the enzyme by ATP; (B) transfer of adenylate to an RNA-N3'P to produce RNA-N3'PP5'A; (C) and attack of the adjacent 2'-hydroxyl on the 3'-phosphorus in the diester linkage to produce the cyclic end product. The biological role of this enzyme is unknown but it is likely to function in some aspects of cellular RNA processing. This is RNA 3'-terminal phosphate cyclase from Shigella sonnei (strain Ss046).